Here is a 549-residue protein sequence, read N- to C-terminus: Glucose-6-phosphate isomerase (549 aa).

The active-site Proton donor is the E355. Residues H386 and K514 contribute to the active site.

Belongs to the GPI family.

It is found in the cytoplasm. It carries out the reaction alpha-D-glucose 6-phosphate = beta-D-fructose 6-phosphate. It functions in the pathway carbohydrate biosynthesis; gluconeogenesis. Its pathway is carbohydrate degradation; glycolysis; D-glyceraldehyde 3-phosphate and glycerone phosphate from D-glucose: step 2/4. In terms of biological role, catalyzes the reversible isomerization of glucose-6-phosphate to fructose-6-phosphate. The sequence is that of Glucose-6-phosphate isomerase from Cronobacter sakazakii (strain ATCC BAA-894) (Enterobacter sakazakii).